The following is a 255-amino-acid chain: Triosephosphate isomerase (255 aa).

9 to 11 contributes to the substrate binding site; it reads NWK. Catalysis depends on histidine 95, which acts as the Electrophile. Glutamate 167 acts as the Proton acceptor in catalysis. Substrate-binding positions include glycine 173, serine 212, and 233–234; that span reads GG.

It belongs to the triosephosphate isomerase family. As to quaternary structure, homodimer.

It is found in the cytoplasm. It catalyses the reaction D-glyceraldehyde 3-phosphate = dihydroxyacetone phosphate. It participates in carbohydrate biosynthesis; gluconeogenesis. Its pathway is carbohydrate degradation; glycolysis; D-glyceraldehyde 3-phosphate from glycerone phosphate: step 1/1. Functionally, involved in the gluconeogenesis. Catalyzes stereospecifically the conversion of dihydroxyacetone phosphate (DHAP) to D-glyceraldehyde-3-phosphate (G3P). This Yersinia pseudotuberculosis serotype O:1b (strain IP 31758) protein is Triosephosphate isomerase.